The sequence spans 668 residues: tRNA 5-methylaminomethyl-2-thiouridine biosynthesis bifunctional protein MnmC (668 aa).

The interval 1 to 245 (MKHYSIQPAN…KREMLCGVME (245 aa)) is tRNA (mnm(5)s(2)U34)-methyltransferase. Positions 270–668 (IGGGIASALL…LLKGKAVKAG (399 aa)) are FAD-dependent cmnm(5)s(2)U34 oxidoreductase.

In the N-terminal section; belongs to the methyltransferase superfamily. tRNA (mnm(5)s(2)U34)-methyltransferase family. The protein in the C-terminal section; belongs to the DAO family. It depends on FAD as a cofactor.

The protein localises to the cytoplasm. It carries out the reaction 5-aminomethyl-2-thiouridine(34) in tRNA + S-adenosyl-L-methionine = 5-methylaminomethyl-2-thiouridine(34) in tRNA + S-adenosyl-L-homocysteine + H(+). In terms of biological role, catalyzes the last two steps in the biosynthesis of 5-methylaminomethyl-2-thiouridine (mnm(5)s(2)U) at the wobble position (U34) in tRNA. Catalyzes the FAD-dependent demodification of cmnm(5)s(2)U34 to nm(5)s(2)U34, followed by the transfer of a methyl group from S-adenosyl-L-methionine to nm(5)s(2)U34, to form mnm(5)s(2)U34. This Escherichia coli O157:H7 protein is tRNA 5-methylaminomethyl-2-thiouridine biosynthesis bifunctional protein MnmC.